Reading from the N-terminus, the 197-residue chain is Small ribosomal subunit protein uS4B (197 aa).

The S4 RNA-binding domain maps to 88 to 150 (SRLDNMVYRM…SRKTEMFVNN (63 aa)).

The protein belongs to the universal ribosomal protein uS4 family. In terms of assembly, part of the 30S ribosomal subunit. Contacts protein S5. The interaction surface between S4 and S5 is involved in control of translational fidelity.

Its function is as follows. One of the primary rRNA binding proteins, it binds directly to 16S rRNA where it nucleates assembly of the body of the 30S subunit. With S5 and S12 plays an important role in translational accuracy. This is Small ribosomal subunit protein uS4B from Clostridium perfringens (strain SM101 / Type A).